The sequence spans 244 residues: 5-oxoprolinase subunit A (244 aa).

It belongs to the LamB/PxpA family. In terms of assembly, forms a complex composed of PxpA, PxpB and PxpC.

The enzyme catalyses 5-oxo-L-proline + ATP + 2 H2O = L-glutamate + ADP + phosphate + H(+). Its function is as follows. Catalyzes the cleavage of 5-oxoproline to form L-glutamate coupled to the hydrolysis of ATP to ADP and inorganic phosphate. The polypeptide is 5-oxoprolinase subunit A (Shigella boydii serotype 18 (strain CDC 3083-94 / BS512)).